Reading from the N-terminus, the 363-residue chain is MKVAIVGGGIIGLFTAYHLRQQGADVVIIEQGEPGGWSKAAAGILEFTRFVINRINVRSYPKRYLSMALRGDARIKTWDWRWISAYLRAWGREPTQDMWEAIKTLGEYSWRQYRALAEAENDFAYSEEPLYEVGIDVAAALEEAKRDPLSPKVETGRCCGREALVYLDAAKLSTEDFVARMLRELQGVQMVRRRAQEVAGREVWLEGGDVVKADAVVVAAGYWARKFGIPVAPFKGYGFRTTAKAQSMFIEMTKGVAVVPLPKWTKVTGRFDLDGTEDHSPSARVLQRAREVLGNFEVLDMSVGYRPCTPDGFPIVDKVGEVVIVTGACRLGWTYGPALGKLAADLALGKPGVEALTARRFRR.

3-17 (VAIVGGGIIGLFTAY) contacts FAD.

This sequence belongs to the DadA oxidoreductase family. Homotetramer. FAD is required as a cofactor.

The protein localises to the cell membrane. The catalysed reaction is D-proline + A = 1-pyrroline-2-carboxylate + AH2. Functionally, catalyzes the dehydrogenation of D-proline. Can also use other D-amino acids, but with lower efficiency. The chain is D-proline dehydrogenase (dpdh) from Pyrobaculum islandicum (strain DSM 4184 / JCM 9189 / GEO3).